A 224-amino-acid polypeptide reads, in one-letter code: Ribonuclease 3 (224 aa).

The RNase III domain occupies 4–127; it reads IEKLEQSLTY…IIGAIHLEAG (124 aa). Mg(2+) is bound at residue E40. The active site involves D44. Mg(2+) is bound by residues D113 and E116. Residue E116 is part of the active site. One can recognise a DRBM domain in the interval 154–223; sequence DYKTKLQEIT…AKIALEKLGA (70 aa).

The protein belongs to the ribonuclease III family. In terms of assembly, homodimer. Mg(2+) is required as a cofactor.

Its subcellular location is the cytoplasm. It catalyses the reaction Endonucleolytic cleavage to 5'-phosphomonoester.. Functionally, digests double-stranded RNA. Involved in the processing of primary rRNA transcript to yield the immediate precursors to the large and small rRNAs (23S and 16S). Also processes some mRNAs, and tRNAs when they are encoded in the rRNA operon. In terms of biological role, CRISPR (clustered regularly interspaced short palindromic repeat) is an adaptive immune system that provides protection against mobile genetic elements (viruses, transposable elements and conjugative plasmids). CRISPR clusters contain spacers, sequences complementary to antecedent mobile elements, and target invading nucleic acids. CRISPR clusters are transcribed and processed into CRISPR RNA (crRNA). In this organism endogenous ribonuclease 3 and Cas9 are required for correct coprocessing of pre-crRNA and the trans-encoded small RNA (tracrRNA). Cas9, crRNA and tracrRNA are required for cleavage of invading DNA. Complements pre-crRNA and tracrRNA coprocessing defects in an rnc deletion in S.pyogenes strain 370. In Campylobacter jejuni subsp. jejuni serotype O:2 (strain ATCC 700819 / NCTC 11168), this protein is Ribonuclease 3.